A 1020-amino-acid chain; its full sequence is Sodium/potassium-transporting ATPase subunit alpha-2 (1020 aa).

A propeptide spanning residues 1–5 is cleaved from the precursor; that stretch reads MGRGA. The disordered stretch occupies residues 1–31; the sequence is MGRGAGREYSPAATTAENGGGKKKQKEKELD. Residues 6-85 are Cytoplasmic-facing; sequence GREYSPAATT…NALTPPPTTP (80 aa). The residue at position 10 (Ser10) is a Phosphoserine. The interval 80–82 is interaction with phosphoinositide-3 kinase; it reads PPP. Residues 86 to 106 traverse the membrane as a helical segment; the sequence is EWVKFCRQLFGGFSILLWIGA. Residues 107-129 lie on the Extracellular side of the membrane; that stretch reads ILCFLAYGIQAAMEDEPSNDNLY. Residues 130-150 form a helical membrane-spanning segment; it reads LGVVLAAVVIVTGCFSYYQEA. The Cytoplasmic segment spans residues 151–286; sequence KSSKIMDSFK…VGRTPIAMEI (136 aa). Residues 212 to 227 are compositionally biased toward polar residues; it reads DNSSLTGESEPQTRSP. Residues 212–231 form a disordered region; it reads DNSSLTGESEPQTRSPEFTH. The chain crosses the membrane as a helical span at residues 287 to 306; the sequence is EHFIQLITGVAVFLGVSFFV. At 307-318 the chain is on the extracellular side; that stretch reads LSLILGYSWLEA. The chain crosses the membrane as a helical span at residues 319-336; it reads VIFLIGIIVANVPEGLLA. Residues 337–769 lie on the Cytoplasmic side of the membrane; the sequence is TVTVCLTLTA…EEGRLIFDNL (433 aa). Asp374 functions as the 4-aspartylphosphate intermediate in the catalytic mechanism. Ser439, Ser450, Ser496, and Ser559 each carry phosphoserine. Position 570 is a phosphothreonine (Thr570). Ser587 and Ser672 each carry phosphoserine. Mg(2+) contacts are provided by Asp714 and Asp718. The chain crosses the membrane as a helical span at residues 770–789; it reads KKSIAYTLTSNIPEITPFLL. The Extracellular portion of the chain corresponds to 790–799; that stretch reads FIIANIPLPL. Residues 800–820 traverse the membrane as a helical segment; it reads GTVTILCIDLGTDMVPAISLA. The Cytoplasmic portion of the chain corresponds to 821–840; sequence YEAAESDIMKRQPRNSQTDK. A Phosphoserine modification is found at Ser826. The chain crosses the membrane as a helical span at residues 841–863; the sequence is LVNERLISMAYGQIGMIQALGGF. The Extracellular portion of the chain corresponds to 864 to 915; that stretch reads FTYFVILAENGFLPSRLLGIRLDWDDRTMNDLEDSYGQEWTYEQRKVVEFTC. A helical transmembrane segment spans residues 916–935; it reads HTAFFASIVVVQWADLIICK. Residues 936–948 lie on the Cytoplasmic side of the membrane; that stretch reads TRRNSVFQQGMKN. Ser940 bears the Phosphoserine; by PKA mark. Residues 949 to 967 form a helical membrane-spanning segment; the sequence is KILIFGLLEETALAAFLSY. At 968–982 the chain is on the extracellular side; the sequence is CPGMGVALRMYPLKV. Residues 983 to 1003 traverse the membrane as a helical segment; sequence TWWFCAFPYSLLIFIYDEVRK. Residues 1004-1020 lie on the Cytoplasmic side of the membrane; that stretch reads LILRRYPGGWVEKETYY.

This sequence belongs to the cation transport ATPase (P-type) (TC 3.A.3) family. Type IIC subfamily. In terms of assembly, the sodium/potassium-transporting ATPase is composed of a catalytic alpha subunit, an auxiliary non-catalytic beta subunit and an additional regulatory subunit. Interacts with regulatory subunit FXYD1.

Its subcellular location is the membrane. The protein resides in the cell membrane. The catalysed reaction is K(+)(out) + Na(+)(in) + ATP + H2O = K(+)(in) + Na(+)(out) + ADP + phosphate + H(+). Functionally, this is the catalytic component of the active enzyme, which catalyzes the hydrolysis of ATP coupled with the exchange of sodium and potassium ions across the plasma membrane. This action creates the electrochemical gradient of sodium and potassium, providing the energy for active transport of various nutrients. In Homo sapiens (Human), this protein is Sodium/potassium-transporting ATPase subunit alpha-2 (ATP1A2).